Here is a 119-residue protein sequence, read N- to C-terminus: Small ribosomal subunit protein bS16 (119 aa).

It belongs to the bacterial ribosomal protein bS16 family.

This chain is Small ribosomal subunit protein bS16, found in Chlamydia caviae (strain ATCC VR-813 / DSM 19441 / 03DC25 / GPIC) (Chlamydophila caviae).